The sequence spans 315 residues: MEVIKITPRGYCYGVVDAMVIARNVALDPTLPRPIYILGMIVHNKHVTDAFAEEGIITLDGENRLEILEKIDKGTVIFTAHGVSPEVKRRAREKGLVTIDATCPDVTKTHNLIKEKLADGYEIIYIGKKGHPEPEGAVGIDPTRIHLVETMEDVERLTIENDRIMVTNQTTMSQWDVADIMAKVKEKYPHVEMHKEICMATQLRQEAVAEQAKDADVTIVVGDPRSNNSNRLAQVSEEIAGTKAYRVADVTEIDINWIKDAKKVAVTAGASTPTPITKEVIDFLEQFDPNDPNTWKRERKVPLQKILPKVKAKKE.

Residue Cys-12 participates in [4Fe-4S] cluster binding. Residues His-43 and His-81 each contribute to the (2E)-4-hydroxy-3-methylbut-2-enyl diphosphate site. His-43 and His-81 together coordinate dimethylallyl diphosphate. Isopentenyl diphosphate contacts are provided by His-43 and His-81. Cys-103 provides a ligand contact to [4Fe-4S] cluster. A (2E)-4-hydroxy-3-methylbut-2-enyl diphosphate-binding site is contributed by His-131. Position 131 (His-131) interacts with dimethylallyl diphosphate. His-131 lines the isopentenyl diphosphate pocket. The Proton donor role is filled by Glu-133. Position 170 (Thr-170) interacts with (2E)-4-hydroxy-3-methylbut-2-enyl diphosphate. Residue Cys-198 coordinates [4Fe-4S] cluster. 3 residues coordinate (2E)-4-hydroxy-3-methylbut-2-enyl diphosphate: Ser-226, Asn-228, and Ser-271. Dimethylallyl diphosphate is bound by residues Ser-226, Asn-228, and Ser-271. Isopentenyl diphosphate contacts are provided by Ser-226, Asn-228, and Ser-271.

The protein belongs to the IspH family. [4Fe-4S] cluster serves as cofactor.

It carries out the reaction isopentenyl diphosphate + 2 oxidized [2Fe-2S]-[ferredoxin] + H2O = (2E)-4-hydroxy-3-methylbut-2-enyl diphosphate + 2 reduced [2Fe-2S]-[ferredoxin] + 2 H(+). It catalyses the reaction dimethylallyl diphosphate + 2 oxidized [2Fe-2S]-[ferredoxin] + H2O = (2E)-4-hydroxy-3-methylbut-2-enyl diphosphate + 2 reduced [2Fe-2S]-[ferredoxin] + 2 H(+). Its pathway is isoprenoid biosynthesis; dimethylallyl diphosphate biosynthesis; dimethylallyl diphosphate from (2E)-4-hydroxy-3-methylbutenyl diphosphate: step 1/1. It participates in isoprenoid biosynthesis; isopentenyl diphosphate biosynthesis via DXP pathway; isopentenyl diphosphate from 1-deoxy-D-xylulose 5-phosphate: step 6/6. Catalyzes the conversion of 1-hydroxy-2-methyl-2-(E)-butenyl 4-diphosphate (HMBPP) into a mixture of isopentenyl diphosphate (IPP) and dimethylallyl diphosphate (DMAPP). Acts in the terminal step of the DOXP/MEP pathway for isoprenoid precursor biosynthesis. The sequence is that of 4-hydroxy-3-methylbut-2-enyl diphosphate reductase from Geobacillus sp. (strain WCH70).